The sequence spans 436 residues: Enolase (436 aa).

Gln-163 contributes to the (2R)-2-phosphoglycerate binding site. Glu-205 acts as the Proton donor in catalysis. The Mg(2+) site is built by Asp-242, Glu-285, and Asp-312. The (2R)-2-phosphoglycerate site is built by Lys-337, Arg-366, Ser-367, and Lys-388. The Proton acceptor role is filled by Lys-337.

The protein belongs to the enolase family. Mg(2+) is required as a cofactor.

The protein resides in the cytoplasm. It localises to the secreted. Its subcellular location is the cell surface. It carries out the reaction (2R)-2-phosphoglycerate = phosphoenolpyruvate + H2O. The protein operates within carbohydrate degradation; glycolysis; pyruvate from D-glyceraldehyde 3-phosphate: step 4/5. Functionally, catalyzes the reversible conversion of 2-phosphoglycerate (2-PG) into phosphoenolpyruvate (PEP). It is essential for the degradation of carbohydrates via glycolysis. The polypeptide is Enolase (Solidesulfovibrio magneticus (strain ATCC 700980 / DSM 13731 / RS-1) (Desulfovibrio magneticus)).